The chain runs to 433 residues: Probable phosphoglucosamine mutase (433 aa).

Residue S91 is the Phosphoserine intermediate of the active site. S91, D229, D231, and D233 together coordinate Mg(2+). S91 is subject to Phosphoserine.

Belongs to the phosphohexose mutase family. Mg(2+) serves as cofactor. Activated by phosphorylation.

It catalyses the reaction alpha-D-glucosamine 1-phosphate = D-glucosamine 6-phosphate. Its function is as follows. Catalyzes the conversion of glucosamine-6-phosphate to glucosamine-1-phosphate. This chain is Probable phosphoglucosamine mutase, found in Methanococcoides burtonii (strain DSM 6242 / NBRC 107633 / OCM 468 / ACE-M).